The chain runs to 370 residues: 3-dehydroquinate synthase (370 aa).

NAD(+) is bound by residues 112–116 (GVIGD), 136–137 (TT), K149, K158, and 176–179 (TLAT). Zn(2+) contacts are provided by E191, H254, and H276.

It belongs to the sugar phosphate cyclases superfamily. Dehydroquinate synthase family. Requires Co(2+) as cofactor. Zn(2+) is required as a cofactor. The cofactor is NAD(+).

Its subcellular location is the cytoplasm. It catalyses the reaction 7-phospho-2-dehydro-3-deoxy-D-arabino-heptonate = 3-dehydroquinate + phosphate. Its pathway is metabolic intermediate biosynthesis; chorismate biosynthesis; chorismate from D-erythrose 4-phosphate and phosphoenolpyruvate: step 2/7. Functionally, catalyzes the conversion of 3-deoxy-D-arabino-heptulosonate 7-phosphate (DAHP) to dehydroquinate (DHQ). In Xylella fastidiosa (strain M12), this protein is 3-dehydroquinate synthase.